A 362-amino-acid chain; its full sequence is 3-dehydroquinate synthase (362 aa).

Residues 71-76 (DGEQYK), 105-109 (GVVGD), 129-130 (TT), Lys142, Lys151, and 169-172 (CLKT) each bind NAD(+). Zn(2+)-binding residues include Glu184, His247, and His264.

The protein belongs to the sugar phosphate cyclases superfamily. Dehydroquinate synthase family. NAD(+) serves as cofactor. The cofactor is Co(2+). It depends on Zn(2+) as a cofactor.

The protein resides in the cytoplasm. It carries out the reaction 7-phospho-2-dehydro-3-deoxy-D-arabino-heptonate = 3-dehydroquinate + phosphate. It functions in the pathway metabolic intermediate biosynthesis; chorismate biosynthesis; chorismate from D-erythrose 4-phosphate and phosphoenolpyruvate: step 2/7. Functionally, catalyzes the conversion of 3-deoxy-D-arabino-heptulosonate 7-phosphate (DAHP) to dehydroquinate (DHQ). This chain is 3-dehydroquinate synthase, found in Escherichia coli O157:H7.